A 371-amino-acid chain; its full sequence is Alanine racemase (371 aa).

The active-site Proton acceptor; specific for D-alanine is the K40. K40 is subject to N6-(pyridoxal phosphate)lysine. R136 contributes to the substrate binding site. Y263 serves as the catalytic Proton acceptor; specific for L-alanine. A substrate-binding site is contributed by M310.

The protein belongs to the alanine racemase family. It depends on pyridoxal 5'-phosphate as a cofactor.

The enzyme catalyses L-alanine = D-alanine. It functions in the pathway amino-acid biosynthesis; D-alanine biosynthesis; D-alanine from L-alanine: step 1/1. Catalyzes the interconversion of L-alanine and D-alanine. May also act on other amino acids. This is Alanine racemase (alr) from Streptococcus mutans serotype c (strain ATCC 700610 / UA159).